The chain runs to 349 residues: Aspartate carbamoyltransferase catalytic subunit (349 aa).

Carbamoyl phosphate-binding residues include Arg59 and Thr60. Lys87 serves as a coordination point for L-aspartate. Carbamoyl phosphate contacts are provided by Arg109, His142, and Gln145. 2 residues coordinate L-aspartate: Arg182 and Arg253. Residues Gly294 and Pro295 each coordinate carbamoyl phosphate.

It belongs to the aspartate/ornithine carbamoyltransferase superfamily. ATCase family. As to quaternary structure, heterododecamer (2C3:3R2) of six catalytic PyrB chains organized as two trimers (C3), and six regulatory PyrI chains organized as three dimers (R2).

It carries out the reaction carbamoyl phosphate + L-aspartate = N-carbamoyl-L-aspartate + phosphate + H(+). It functions in the pathway pyrimidine metabolism; UMP biosynthesis via de novo pathway; (S)-dihydroorotate from bicarbonate: step 2/3. Functionally, catalyzes the condensation of carbamoyl phosphate and aspartate to form carbamoyl aspartate and inorganic phosphate, the committed step in the de novo pyrimidine nucleotide biosynthesis pathway. The protein is Aspartate carbamoyltransferase catalytic subunit of Synechococcus sp. (strain CC9311).